The sequence spans 273 residues: 4-hydroxy-tetrahydrodipicolinate reductase (273 aa).

NAD(+) contacts are provided by residues 12–17 (GAGGRM) and Glu-38. Arg-39 serves as a coordination point for NADP(+). NAD(+) contacts are provided by residues 102–104 (GTT) and 126–129 (AANF). His-159 (proton donor/acceptor) is an active-site residue. His-160 is a binding site for (S)-2,3,4,5-tetrahydrodipicolinate. The Proton donor role is filled by Lys-163. 169–170 (GT) lines the (S)-2,3,4,5-tetrahydrodipicolinate pocket.

Belongs to the DapB family. Homotetramer.

Its subcellular location is the cytoplasm. It catalyses the reaction (S)-2,3,4,5-tetrahydrodipicolinate + NAD(+) + H2O = (2S,4S)-4-hydroxy-2,3,4,5-tetrahydrodipicolinate + NADH + H(+). The enzyme catalyses (S)-2,3,4,5-tetrahydrodipicolinate + NADP(+) + H2O = (2S,4S)-4-hydroxy-2,3,4,5-tetrahydrodipicolinate + NADPH + H(+). The protein operates within amino-acid biosynthesis; L-lysine biosynthesis via DAP pathway; (S)-tetrahydrodipicolinate from L-aspartate: step 4/4. Functionally, catalyzes the conversion of 4-hydroxy-tetrahydrodipicolinate (HTPA) to tetrahydrodipicolinate. The sequence is that of 4-hydroxy-tetrahydrodipicolinate reductase from Escherichia coli (strain K12 / MC4100 / BW2952).